We begin with the raw amino-acid sequence, 411 residues long: Protrudin (411 aa).

A disordered region spans residues 1–27 (MQTSEREGSGPELSPSVMPEAPLESPP). Topologically, residues 1–66 (MQTSEREGSG…AGDGVRYLLR (66 aa)) are cytoplasmic. The tract at residues 1 to 92 (MQTSEREGSG…LFLTLNEGAW (92 aa)) is sufficient for homooligomerization. The tract at residues 1–205 (MQTSEREGSG…LYLLPLCWVL (205 aa)) is sufficient for localization to endoplasmic reticulum tubular network and for interactions with REEP1, REEP5, ATL1, ATL2, ATL3 and SPAST. Positions 51–64 (LEPLKDAGDGVRYL) are necessary for interaction with RAB11A and function in neurite outgrowth. Residues 67-87 (WQMPLCSLLTCLGLNVLFLTL) traverse the membrane as a helical segment. Position 88 (asparagine 88) is a topological domain, lumenal. The chain crosses the membrane as a helical span at residues 89-109 (EGAWYSVGALMISVPALLGYL). At 110–187 (QEVCRARLPE…NPVVSSQFYG (78 aa)) the chain is on the cytoplasmic side. An intramembrane region (helical) is located at residues 188 to 208 (ALLGTICMLYLLPLCWVLTLL). The Cytoplasmic segment spans residues 209–411 (NSTLFLGNVE…CASCNQTLSK (203 aa)). Positions 234–286 (MNPKQEEHAFESPPPPDVGGKGGLMDSTPALTPTEDLTPGSVEEAEEAEPDEE) are disordered. The tract at residues 271-361 (TPGSVEEAEE…GCSATFSVLK (91 aa)) is necessary for interaction with KIF5A. Residues 276–286 (EEAEEAEPDEE) show a composition bias toward acidic residues. The necessary for interaction with VAPA stretch occupies residues 286 to 292 (EFKDAIE). The FYVE-type zinc finger occupies 344 to 410 (TNNFGNCTGC…VCASCNQTLS (67 aa)). Cysteine 350, cysteine 353, cysteine 366, cysteine 369, cysteine 374, cysteine 377, cysteine 402, and cysteine 405 together coordinate Zn(2+).

In terms of assembly, can form homooligomers (monomers, dimers and tetramers). Interacts with RAB11A (GDP-bound form); regulates RAB11A. Interacts with FKBP8; may negatively regulate ZFYVE27 phosphorylation. Interacts with VAPA (via MSP domain); may regulate ZFYVE27 retention in the endoplasmic reticulum and its function in cell projections formation. Interacts with VAPB (via MSP domain). Interacts with RAB11B (GDP-bound form), REEP1, REEP5, ATL1, ATL2, ATL3, SPAST, SURF4, KIF5A, KIF5B, KIF5C and RTN3. In terms of processing, phosphorylated. Phosphorylation is induced by NGF through the MAPK/ERK pathway and modulates interaction with RAB11A.

It localises to the recycling endosome membrane. The protein resides in the endoplasmic reticulum membrane. The protein localises to the cell projection. It is found in the growth cone membrane. Key regulator of RAB11-dependent vesicular trafficking during neurite extension through polarized membrane transport. Promotes axonal elongation and contributes to the establishment of neuronal cell polarity. Involved in nerve growth factor-induced neurite formation in VAPA-dependent manner. Contributes to both the formation and stabilization of the tubular ER network. Involved in ER morphogenesis by regulating the sheet-to-tubule balance and possibly the density of tubule interconnections. Acts as an adapter protein that facilitates the interaction of KIF5A with VAPA, VAPB, SURF4, RAB11A, RAB11B and RTN3 and the ZFYVE27-KIF5A complex contributes to the transport of these proteins in neurons. Can induce formation of neurite-like membrane protrusions in non-neuronal cells in a KIF5A/B-dependent manner. In Pongo abelii (Sumatran orangutan), this protein is Protrudin (ZFYVE27).